Here is a 101-residue protein sequence, read N- to C-terminus: Interleukin-8 (101 aa).

Positions 1 to 22 are cleaved as a signal peptide; it reads MTSKLAVALLAAFVLSAALCEA. Arginine 27 is modified (citrulline). 2 cysteine pairs are disulfide-bonded: cysteine 34–cysteine 61 and cysteine 36–cysteine 77.

Belongs to the intercrine alpha (chemokine CxC) family. As to quaternary structure, homodimer. Interacts with TNFAIP6 (via Link domain); this interaction interferes with chemokine binding to glycosaminoglycans. Post-translationally, citrullination at Arg-27 prevents proteolysis, and dampens tissue inflammation, it also enhances leukocytosis, possibly through impaired chemokine clearance from the blood circulation.

It localises to the secreted. Functionally, chemotactic factor that mediates inflammatory response by attracting neutrophils, basophils, and T-cells to clear pathogens and protect the host from infection. Also plays an important role in neutrophil activation. Released in response to an inflammatory stimulus, exerts its effect by binding to the G-protein-coupled receptors CXCR1 and CXCR2, primarily found in neutrophils, monocytes and endothelial cells. G-protein heterotrimer (alpha, beta, gamma subunits) constitutively binds to CXCR1/CXCR2 receptor and activation by IL8 leads to beta and gamma subunits release from Galpha (GNAI2 in neutrophils) and activation of several downstream signaling pathways including PI3K and MAPK pathways. The protein is Interleukin-8 (CXCL8) of Canis lupus familiaris (Dog).